Consider the following 238-residue polypeptide: Ubiquinone biosynthesis O-methyltransferase (238 aa).

The S-adenosyl-L-methionine site is built by arginine 38, glycine 58, aspartate 79, and methionine 124.

This sequence belongs to the methyltransferase superfamily. UbiG/COQ3 family.

The enzyme catalyses a 3-demethylubiquinol + S-adenosyl-L-methionine = a ubiquinol + S-adenosyl-L-homocysteine + H(+). The catalysed reaction is a 3-(all-trans-polyprenyl)benzene-1,2-diol + S-adenosyl-L-methionine = a 2-methoxy-6-(all-trans-polyprenyl)phenol + S-adenosyl-L-homocysteine + H(+). Its pathway is cofactor biosynthesis; ubiquinone biosynthesis. Its function is as follows. O-methyltransferase that catalyzes the 2 O-methylation steps in the ubiquinone biosynthetic pathway. This is Ubiquinone biosynthesis O-methyltransferase from Acinetobacter baylyi (strain ATCC 33305 / BD413 / ADP1).